The sequence spans 336 residues: MIEADRLISAGATIAEEVADRAIRPKLLAEYVGQPQVRSQMEIFIQAAKLRGDALDHLLIFGPPGLGKTTLANIVANEMGVNLRTTSGPVLEKAGDLAAMLTNLEPHDVLFIDEIHRLSPVVEEVLYPAMEDYQLDIMIGEGPAARSIKIDLPPFTLIGATTRAGSLTSPLRDRFGIVQRLEFYQVPDLQHIVGRSARHMGLEMSDDGALEVARRARGTPRIANRLLRRVRDFAEVKHDGAISAEIAAQALDMLNVDAEGFDYMDRKLLLAVIDKFFGGPVGLDNLAAAIGEERETIEDVLEPYLIQQGFLQRTPRGRMATVRAWNHFGITPPEMP.

The tract at residues 4–184 (ADRLISAGAT…FGIVQRLEFY (181 aa)) is large ATPase domain (RuvB-L). ATP contacts are provided by residues Ile-23, Arg-24, Gly-65, Lys-68, Thr-69, Thr-70, 131-133 (EDY), Arg-174, Tyr-184, and Arg-221. Position 69 (Thr-69) interacts with Mg(2+). Residues 185-255 (QVPDLQHIVG…IAAQALDMLN (71 aa)) form a small ATPAse domain (RuvB-S) region. Residues 258-336 (AEGFDYMDRK…HFGITPPEMP (79 aa)) are head domain (RuvB-H). Residues Arg-294, Arg-313, and Arg-318 each coordinate DNA.

It belongs to the RuvB family. As to quaternary structure, homohexamer. Forms an RuvA(8)-RuvB(12)-Holliday junction (HJ) complex. HJ DNA is sandwiched between 2 RuvA tetramers; dsDNA enters through RuvA and exits via RuvB. An RuvB hexamer assembles on each DNA strand where it exits the tetramer. Each RuvB hexamer is contacted by two RuvA subunits (via domain III) on 2 adjacent RuvB subunits; this complex drives branch migration. In the full resolvosome a probable DNA-RuvA(4)-RuvB(12)-RuvC(2) complex forms which resolves the HJ.

Its subcellular location is the cytoplasm. It carries out the reaction ATP + H2O = ADP + phosphate + H(+). The RuvA-RuvB-RuvC complex processes Holliday junction (HJ) DNA during genetic recombination and DNA repair, while the RuvA-RuvB complex plays an important role in the rescue of blocked DNA replication forks via replication fork reversal (RFR). RuvA specifically binds to HJ cruciform DNA, conferring on it an open structure. The RuvB hexamer acts as an ATP-dependent pump, pulling dsDNA into and through the RuvAB complex. RuvB forms 2 homohexamers on either side of HJ DNA bound by 1 or 2 RuvA tetramers; 4 subunits per hexamer contact DNA at a time. Coordinated motions by a converter formed by DNA-disengaged RuvB subunits stimulates ATP hydrolysis and nucleotide exchange. Immobilization of the converter enables RuvB to convert the ATP-contained energy into a lever motion, pulling 2 nucleotides of DNA out of the RuvA tetramer per ATP hydrolyzed, thus driving DNA branch migration. The RuvB motors rotate together with the DNA substrate, which together with the progressing nucleotide cycle form the mechanistic basis for DNA recombination by continuous HJ branch migration. Branch migration allows RuvC to scan DNA until it finds its consensus sequence, where it cleaves and resolves cruciform DNA. The chain is Holliday junction branch migration complex subunit RuvB from Salmonella arizonae (strain ATCC BAA-731 / CDC346-86 / RSK2980).